The sequence spans 362 residues: Putative F-box/kelch-repeat protein At3g20710 (362 aa).

The F-box domain maps to 1–50 (MMMSNLPKDLVEEILSRVPFKYLRAIRSTCKNWYDLSKNRSFANKNIDKA). Kelch repeat units follow at residues 150–201 (YDKS…VSLN) and 293–341 (IYCR…YFKS).

This Arabidopsis thaliana (Mouse-ear cress) protein is Putative F-box/kelch-repeat protein At3g20710.